The chain runs to 290 residues: Small ribosomal subunit biogenesis GTPase RsgA (290 aa).

The CP-type G domain occupies 61 to 218 (SSELLRPAVA…IVDTPGFSTL (158 aa)). GTP-binding positions include 110–113 (NKVD) and 161–169 (GPSGAGKST). Residues cysteine 243, cysteine 248, histidine 250, and cysteine 256 each coordinate Zn(2+).

The protein belongs to the TRAFAC class YlqF/YawG GTPase family. RsgA subfamily. In terms of assembly, monomer. Associates with 30S ribosomal subunit, binds 16S rRNA. Zn(2+) is required as a cofactor.

The protein localises to the cytoplasm. In terms of biological role, one of several proteins that assist in the late maturation steps of the functional core of the 30S ribosomal subunit. Helps release RbfA from mature subunits. May play a role in the assembly of ribosomal proteins into the subunit. Circularly permuted GTPase that catalyzes slow GTP hydrolysis, GTPase activity is stimulated by the 30S ribosomal subunit. This Clostridium botulinum (strain Eklund 17B / Type B) protein is Small ribosomal subunit biogenesis GTPase RsgA.